A 55-amino-acid polypeptide reads, in one-letter code: uncharacterized protein (55 aa).

This is an uncharacterized protein from Bacillus subtilis (strain 168).